Reading from the N-terminus, the 379-residue chain is Alcohol dehydrogenase 3 (379 aa).

Positions 47, 49, 69, 99, 102, 105, 113, and 177 each coordinate Zn(2+). Residues Thr-49 and His-69 each contribute to the an alcohol site. Thr-49 lines the NAD(+) pocket. NAD(+) contacts are provided by residues 202–207 (GLGAVG), Asp-226, Lys-231, Thr-272, Val-295, 295–297 (VGV), Phe-322, and Arg-372.

Belongs to the zinc-containing alcohol dehydrogenase family. In terms of assembly, homodimer. It depends on Zn(2+) as a cofactor.

Its subcellular location is the cytoplasm. The enzyme catalyses a primary alcohol + NAD(+) = an aldehyde + NADH + H(+). The catalysed reaction is a secondary alcohol + NAD(+) = a ketone + NADH + H(+). This is Alcohol dehydrogenase 3 (ADH3) from Hordeum vulgare (Barley).